Consider the following 150-residue polypeptide: Large ribosomal subunit protein bL9 (150 aa).

Belongs to the bacterial ribosomal protein bL9 family.

Its function is as follows. Binds to the 23S rRNA. This Burkholderia pseudomallei (strain 668) protein is Large ribosomal subunit protein bL9.